Here is a 955-residue protein sequence, read N- to C-terminus: MEASSSGITNGKTKVFHPEGGVDLQGYQLDMQILPDGPKSDVDFSEILNAIQEMAKDVNILFDELEAVSSPCKDDDSLLHPGNLTSTSDDASRLEAGGETVPERNKSNGLYFRDGKCRIDYILVYRKSNPQTEKREVFERNIRAEGLQMEKESSLINSDIIFVKLHAPWEVLGRYAEQMNVRMPFRRKIYYLPRRYKFMSRIDKQISRFRRWLPKKPMRLDKETLPDLEENDCYTAPFSQQRIHHFIIHNKETFFNNATRSRIVHHILQRIKYEEGKNKIGLNRLLTNGSYEAAFPLHEGSYRSKNSIRTHGAENHRHLLYECWASWGVWYKYQPLDLVRRYFGEKIGLYFAWLGWYTGMLFPAAFIGLFVFLYGVTTLDHSQVSKEVCQATDIIMCPVCDKYCPFMRLSDSCVYAKVTHLFDNGATVFFAVFMAVWATVFLEFWKRRRAVIAYDWDLIDWEEEEEEIRPQFEAKYSKKERMNPISGKPEPYQAFTDKCSRLIVSASGIFFMICVVIAAVFGIVIYRVVTVSTFAAFKWALIRNNSQVATTGTAVCINFCIIMLLNVLYEKVALLLTNLEQPRTESEWENSFTLKMFLFQFVNLNSSTFYIAFFLGRFTGHPGAYLRLINRWRLEECHPSGCLIDLCMQMGIIMVLKQTWNNFMELGYPLIQNWWTRRKVRQEHGPERKISFPQWEKDYNLQPMNAYGLFDEYLEMILQFGFTTIFVAAFPLAPLLALLNNIIEIRLDAYKFVTQWRRPLASRAKDIGIWYGILEGIGILSVITNAFVIAITSDFIPRLVYAYKYGPCAGQGEAGQKCMVGYVNASLSVFRISDFENRSEPESDGSEFSGTPLKYCRYRDYRDPPHSLVPYGYTLQFWHVLAARLAFIIVFEHLVFCIKHLISYLIPDLPKDLRDRMRREKYLIQEMMYEAELERLQKERKERKKNGKAHHNEWP.

Residues 1–352 (MEASSSGITN…FGEKIGLYFA (352 aa)) are Extracellular-facing. The tract at residues 72 to 100 (CKDDDSLLHPGNLTSTSDDASRLEAGGET) is disordered. Residues N83, N105, N257, and N288 are each glycosylated (N-linked (GlcNAc...) asparagine). A helical membrane pass occupies residues 353–373 (WLGWYTGMLFPAAFIGLFVFL). Residues 374 to 424 (YGVTTLDHSQVSKEVCQATDIIMCPVCDKYCPFMRLSDSCVYAKVTHLFDN) are Cytoplasmic-facing. The helical transmembrane segment at 425–445 (GATVFFAVFMAVWATVFLEFW) threads the bilayer. Residues 446 to 505 (KRRRAVIAYDWDLIDWEEEEEEIRPQFEAKYSKKERMNPISGKPEPYQAFTDKCSRLIVS) are Extracellular-facing. The helical transmembrane segment at 506 to 526 (ASGIFFMICVVIAAVFGIVIY) threads the bilayer. The Cytoplasmic portion of the chain corresponds to 527 to 547 (RVVTVSTFAAFKWALIRNNSQ). A helical membrane pass occupies residues 548-568 (VATTGTAVCINFCIIMLLNVL). At 569–595 (YEKVALLLTNLEQPRTESEWENSFTLK) the chain is on the extracellular side. The helical transmembrane segment at 596–616 (MFLFQFVNLNSSTFYIAFFLG) threads the bilayer. At 617 to 715 (RFTGHPGAYL…AYGLFDEYLE (99 aa)) the chain is on the cytoplasmic side. A helical membrane pass occupies residues 716–736 (MILQFGFTTIFVAAFPLAPLL). The Extracellular segment spans residues 737–768 (ALLNNIIEIRLDAYKFVTQWRRPLASRAKDIG). The helical transmembrane segment at 769–789 (IWYGILEGIGILSVITNAFVI) threads the bilayer. Residues 790–885 (AITSDFIPRL…QFWHVLAARL (96 aa)) lie on the Cytoplasmic side of the membrane. A helical transmembrane segment spans residues 886-906 (AFIIVFEHLVFCIKHLISYLI). The Extracellular segment spans residues 907–955 (PDLPKDLRDRMRREKYLIQEMMYEAELERLQKERKERKKNGKAHHNEWP).

It belongs to the anoctamin family.

It is found in the cell membrane. The catalysed reaction is a 1,2-diacyl-sn-glycero-3-phospho-L-serine(in) = a 1,2-diacyl-sn-glycero-3-phospho-L-serine(out). It catalyses the reaction a beta-D-galactosyl-(1&lt;-&gt;1')-N-acylsphing-4-enine(out) = a beta-D-galactosyl-(1&lt;-&gt;1')-N-acylsphing-4-enine(in). It carries out the reaction a 1,2-diacyl-sn-glycero-3-phosphocholine(in) = a 1,2-diacyl-sn-glycero-3-phosphocholine(out). Functionally, has calcium-dependent phospholipid scramblase activity; scrambles phosphatidylserine, phosphatidylcholine and galactosylceramide. Does not exhibit calcium-activated chloride channel (CaCC) activity. The polypeptide is Anoctamin-4 (ANO4) (Homo sapiens (Human)).